The chain runs to 201 residues: Translation machinery-associated protein 22 (201 aa).

The SUI1 domain maps to 104-175 (VTVKRIERNK…EIKEFIVEKY (72 aa)).

This sequence belongs to the DENR family. As to quaternary structure, interacts with the 40S ribosomal subunit.

The protein resides in the cytoplasm. This Pyricularia oryzae (strain 70-15 / ATCC MYA-4617 / FGSC 8958) (Rice blast fungus) protein is Translation machinery-associated protein 22 (TMA22).